A 200-amino-acid polypeptide reads, in one-letter code: 3-isopropylmalate dehydratase small subunit (200 aa).

Belongs to the LeuD family. LeuD type 1 subfamily. In terms of assembly, heterodimer of LeuC and LeuD.

It carries out the reaction (2R,3S)-3-isopropylmalate = (2S)-2-isopropylmalate. It functions in the pathway amino-acid biosynthesis; L-leucine biosynthesis; L-leucine from 3-methyl-2-oxobutanoate: step 2/4. In terms of biological role, catalyzes the isomerization between 2-isopropylmalate and 3-isopropylmalate, via the formation of 2-isopropylmaleate. The polypeptide is 3-isopropylmalate dehydratase small subunit (Aliivibrio fischeri (strain ATCC 700601 / ES114) (Vibrio fischeri)).